Reading from the N-terminus, the 320-residue chain is Malate dehydrogenase (320 aa).

Residues 10-15 (GAGQIG) and aspartate 34 contribute to the NAD(+) site. Positions 83 and 89 each coordinate substrate. NAD(+)-binding positions include asparagine 96 and 119–121 (ITN). 2 residues coordinate substrate: asparagine 121 and arginine 152. Histidine 176 serves as the catalytic Proton acceptor.

Belongs to the LDH/MDH superfamily. MDH type 3 family.

The catalysed reaction is (S)-malate + NAD(+) = oxaloacetate + NADH + H(+). Catalyzes the reversible oxidation of malate to oxaloacetate. The protein is Malate dehydrogenase of Methylorubrum extorquens (strain CM4 / NCIMB 13688) (Methylobacterium extorquens).